The chain runs to 460 residues: Elongation factor 1-alpha (460 aa).

Glycine 2 is subject to N,N,N-trimethylglycine. Lysine 3 is subject to N6,N6-dimethyllysine; alternate. Residue lysine 3 is modified to N6-methyllysine; alternate. A tr-type G domain is found at 5–240 (KTHVNLVVIG…DAIEPPVRPS (236 aa)). The G1 stretch occupies residues 14–21 (GHVDAGKS). 14–21 (GHVDAGKS) serves as a coordination point for GTP. N6-methyllysine is present on lysine 30. Positions 70–74 (GITID) are G2. Lysine 79 carries the post-translational modification N6,N6,N6-trimethyllysine. Residues 91–94 (DAPG) are G3. Residues 91–95 (DAPGH) and 153–156 (NKMD) each bind GTP. Positions 153–156 (NKMD) are G4. A G5 region spans residues 192 to 194 (SGW). N6,N6-dimethyllysine; alternate is present on lysine 317. Lysine 317 carries the N6-methyllysine; alternate modification. At lysine 391 the chain carries N6-methyllysine.

Belongs to the TRAFAC class translation factor GTPase superfamily. Classic translation factor GTPase family. EF-Tu/EF-1A subfamily.

The protein resides in the cytoplasm. This protein promotes the GTP-dependent binding of aminoacyl-tRNA to the A-site of ribosomes during protein biosynthesis. The protein is Elongation factor 1-alpha (TEF) of Yarrowia lipolytica (strain CLIB 122 / E 150) (Yeast).